Consider the following 282-residue polypeptide: Undecaprenyl-diphosphatase (282 aa).

Transmembrane regions (helical) follow at residues 40–60, 89–109, 113–133, 150–170, 196–216, 230–250, and 258–278; these read GAAF…IYFM, WMIA…KDDI, LRSL…LSIA, ISEI…MALI, FSFL…LYKT, IAVA…FLLT, and GIFI…IGTG.

The protein belongs to the UppP family.

The protein localises to the cell inner membrane. It carries out the reaction di-trans,octa-cis-undecaprenyl diphosphate + H2O = di-trans,octa-cis-undecaprenyl phosphate + phosphate + H(+). Its function is as follows. Catalyzes the dephosphorylation of undecaprenyl diphosphate (UPP). Confers resistance to bacitracin. The polypeptide is Undecaprenyl-diphosphatase (Chlorobaculum parvum (strain DSM 263 / NCIMB 8327) (Chlorobium vibrioforme subsp. thiosulfatophilum)).